We begin with the raw amino-acid sequence, 456 residues long: Cysteine--tRNA ligase (456 aa).

Residue C30 participates in Zn(2+) binding. The 'HIGH' region motif lies at 32–42 (MTVYDFCHIGH). Zn(2+) contacts are provided by C211, H236, and E240. Residues 268 to 272 (KMSKS) carry the 'KMSKS' region motif. An ATP-binding site is contributed by K271.

Belongs to the class-I aminoacyl-tRNA synthetase family. As to quaternary structure, monomer. It depends on Zn(2+) as a cofactor.

Its subcellular location is the cytoplasm. It catalyses the reaction tRNA(Cys) + L-cysteine + ATP = L-cysteinyl-tRNA(Cys) + AMP + diphosphate. In Dichelobacter nodosus (strain VCS1703A), this protein is Cysteine--tRNA ligase.